The following is a 45-amino-acid chain: Osteocalcin (45 aa).

One can recognise a Gla domain in the interval 1 to 41; sequence AAGELTLTQLESLREVCEANLACEDMMDAQGIIAAYTAYYG. Residues glutamate 11, glutamate 15, glutamate 18, and glutamate 24 each contribute to the Ca(2+) site. 4-carboxyglutamate occurs at positions 11, 15, and 18. Residues cysteine 17 and cysteine 23 are joined by a disulfide bond.

This sequence belongs to the osteocalcin/matrix Gla protein family. Gamma-carboxyglutamate residues are formed by vitamin K dependent carboxylation by GGCX. These residues are essential for the binding of calcium. In terms of tissue distribution, also found in smaller quantities in dentin.

The protein localises to the secreted. Its function is as follows. The carboxylated form is one of the main organic components of the bone matrix, which constitutes 1-2% of the total bone protein. The carboxylated form binds strongly to apatite and calcium. The chain is Osteocalcin (bglap) from Lepomis macrochirus (Bluegill).